A 521-amino-acid polypeptide reads, in one-letter code: Acetylcholine receptor subunit beta-like 1 (521 aa).

An N-terminal signal peptide occupies residues 1 to 24 (MESSCKSWLLCSILVLVAFSLVSA). Residues 25-235 (SEDEERLVRD…ITFYIIIRRK (211 aa)) lie on the Extracellular side of the membrane. The N-linked (GlcNAc...) asparagine glycan is linked to N48. C152 and C166 are oxidised to a cystine. The next 3 membrane-spanning stretches (helical) occupy residues 236-260 (TLFY…VFYL), 268-286 (VTLG…LLVS), and 302-323 (YLLF…IINW). The Cytoplasmic portion of the chain corresponds to 324-481 (NFRGPRTHRM…WKYVAMVIDR (158 aa)). A helical membrane pass occupies residues 482-500 (LQLYIFFIVTTAGTVGILM).

The protein belongs to the ligand-gated ion channel (TC 1.A.9) family. Acetylcholine receptor (TC 1.A.9.1) subfamily. As to expression, CNS in embryos.

The protein resides in the postsynaptic cell membrane. Its subcellular location is the cell membrane. In terms of biological role, after binding acetylcholine, the AChR responds by an extensive change in conformation that affects all subunits and leads to opening of an ion-conducting channel across the plasma membrane. The chain is Acetylcholine receptor subunit beta-like 1 (nAChRbeta1) from Drosophila melanogaster (Fruit fly).